Reading from the N-terminus, the 185-residue chain is Ribosome-recycling factor (185 aa).

The protein belongs to the RRF family.

The protein localises to the cytoplasm. Its function is as follows. Responsible for the release of ribosomes from messenger RNA at the termination of protein biosynthesis. May increase the efficiency of translation by recycling ribosomes from one round of translation to another. In Streptococcus uberis (strain ATCC BAA-854 / 0140J), this protein is Ribosome-recycling factor.